The sequence spans 363 residues: 3-dehydroquinate synthase (363 aa).

NAD(+) contacts are provided by residues 134–135 (TT), K147, and K156. Residues E189, H254, and H271 each coordinate Zn(2+).

This sequence belongs to the sugar phosphate cyclases superfamily. Dehydroquinate synthase family. The cofactor is Co(2+). Zn(2+) serves as cofactor. NAD(+) is required as a cofactor.

Its subcellular location is the cytoplasm. It catalyses the reaction 7-phospho-2-dehydro-3-deoxy-D-arabino-heptonate = 3-dehydroquinate + phosphate. It functions in the pathway metabolic intermediate biosynthesis; chorismate biosynthesis; chorismate from D-erythrose 4-phosphate and phosphoenolpyruvate: step 2/7. In terms of biological role, catalyzes the conversion of 3-deoxy-D-arabino-heptulosonate 7-phosphate (DAHP) to dehydroquinate (DHQ). This chain is 3-dehydroquinate synthase, found in Prochlorococcus marinus (strain MIT 9215).